Consider the following 1708-residue polypeptide: Clathrin heavy chain 1 (1708 aa).

The tract at residues 1–492 is globular terminal domain; the sequence is MAAANAPIAM…VDNDLALKIY (492 aa). WD40-like repeat stretches follow at residues 25 to 67, 68 to 113, 114 to 155, 156 to 205, 206 to 270, 271 to 314, and 315 to 343; these read FVTF…RPIT, ADSA…MPEQ, VVFW…ANLA, NNQI…QALE, AHAA…PDFQ, DDFP…ISPD, and PIFLTAESSASGGFYAINRRGQVLHATVN. The binding site for the uncoating ATPase, involved in lattice disassembly stretch occupies residues 462-478; sequence ENWLAEDKLECSEELGD. A flexible linker region spans residues 493 to 536; that stretch reads IKARATPKVVAAFAERREFDKILIYSKQVGYTPDYLFLLQTILR. A distal segment region spans residues 537–648; sequence TDPQGAVNFA…RALQHYTELP (112 aa). Residues 537–1708 form a heavy chain arm region; it reads TDPQGAVNFA…AYGMPPMGSY (1172 aa). 7 CHCR repeats span residues 551 to 697, 700 to 842, 847 to 986, 993 to 1138, 1142 to 1283, 1288 to 1434, and 1437 to 1580; these read QMEG…QIVV, AKEY…PEDF, ILSV…QLID, LPES…VSEA, FIRA…FRLA, LNII…DLIN, and LNVL…KECF. A proximal segment region spans residues 653–1708; that stretch reads VMVNTHAIEP…AYGMPPMGSY (1056 aa). The segment at 1227–1536 is involved in binding clathrin light chain; the sequence is AAKIIYAFIS…YIYKKAGRWK (310 aa). Residues 1564-1708 form a trimerization region; the sequence is SEDLLVYFIE…AYGMPPMGSY (145 aa).

This sequence belongs to the clathrin heavy chain family. As to quaternary structure, clathrin triskelions, composed of 3 heavy chains and 3 light chains, are the basic subunits of the clathrin coat.

Its subcellular location is the cytoplasmic vesicle membrane. It localises to the membrane. It is found in the coated pit. Functionally, clathrin is the major protein of the polyhedral coat of coated pits and vesicles. This Oryza sativa subsp. japonica (Rice) protein is Clathrin heavy chain 1.